We begin with the raw amino-acid sequence, 345 residues long: Phosphoribosylformylglycinamidine cyclo-ligase (345 aa).

This sequence belongs to the AIR synthase family.

It is found in the cytoplasm. The catalysed reaction is 2-formamido-N(1)-(5-O-phospho-beta-D-ribosyl)acetamidine + ATP = 5-amino-1-(5-phospho-beta-D-ribosyl)imidazole + ADP + phosphate + H(+). The protein operates within purine metabolism; IMP biosynthesis via de novo pathway; 5-amino-1-(5-phospho-D-ribosyl)imidazole from N(2)-formyl-N(1)-(5-phospho-D-ribosyl)glycinamide: step 2/2. In Synechococcus sp. (strain CC9605), this protein is Phosphoribosylformylglycinamidine cyclo-ligase.